We begin with the raw amino-acid sequence, 290 residues long: HTH-type transcriptional activator RhaR (290 aa).

An HTH araC/xylS-type domain is found at 179 to 277 (DLIMSALQQS…GMTPRDYRQR (99 aa)). DNA-binding regions (H-T-H motif) lie at residues 196-217 (ADFC…RQQT) and 244-267 (ISDI…TREA).

Binds DNA as a dimer.

The protein resides in the cytoplasm. Functionally, activates expression of the rhaSR operon in response to L-rhamnose. This chain is HTH-type transcriptional activator RhaR, found in Yersinia pseudotuberculosis serotype O:1b (strain IP 31758).